The sequence spans 108 residues: Beta-defensin 126 (108 aa).

A signal peptide spans 1–20 (MKSLLFTLAVFMLLAQLVSG). The in vitro binds to LPS, mediates antimicrobial activity and inhibits LPS-mediated inflammation stretch occupies residues 21 to 63 (NWYVKKCLNDVGICKKKCKPGEMHIKNGWATCGKQRDCCVPAD). Disulfide bonds link Cys-27-Cys-58, Cys-34-Cys-52, and Cys-38-Cys-59.

It belongs to the beta-defensin family. As to quaternary structure, homodimer or homooligomer; disulfide-linked. Post-translationally, O-glycosylated; glycans contain alpha(2,3)-linked sialic acids.

The protein resides in the secreted. Highly glycosylated atypical beta-defensin involved in several aspects of sperm function. Facilitates sperm transport in the female reproductive tract and contributes to sperm protection against immunodetection; both functions are probably implicating the negative surface charge provided by its O-linked oligosaccharides in the sperm glycocalyx. Involved in binding of sperm to oviductal epithelial cells to form a sperm reservoir until ovulation. Release from the sperm surface during capacitation and ovaluation by an elevation of oviductal fluid pH is unmasking other surface components and allows sperm to penetrate the cumulus matrix and bind to the zona pellucida of the oocyte. In vitro has antimicrobial activity and may inhibit LPS-mediated inflammation. This is Beta-defensin 126 (DEFB126) from Pan troglodytes (Chimpanzee).